The following is a 358-amino-acid chain: Phospho-N-acetylmuramoyl-pentapeptide-transferase (358 aa).

The next 10 helical transmembrane spans lie at A26–D46, G70–W90, T94–V114, M134–F154, E169–V189, G197–A217, A234–F254, V261–I281, I286–V306, and K335–L355.

Belongs to the glycosyltransferase 4 family. MraY subfamily. It depends on Mg(2+) as a cofactor.

It is found in the cell inner membrane. It catalyses the reaction UDP-N-acetyl-alpha-D-muramoyl-L-alanyl-gamma-D-glutamyl-meso-2,6-diaminopimeloyl-D-alanyl-D-alanine + di-trans,octa-cis-undecaprenyl phosphate = di-trans,octa-cis-undecaprenyl diphospho-N-acetyl-alpha-D-muramoyl-L-alanyl-D-glutamyl-meso-2,6-diaminopimeloyl-D-alanyl-D-alanine + UMP. It functions in the pathway cell wall biogenesis; peptidoglycan biosynthesis. Catalyzes the initial step of the lipid cycle reactions in the biosynthesis of the cell wall peptidoglycan: transfers peptidoglycan precursor phospho-MurNAc-pentapeptide from UDP-MurNAc-pentapeptide onto the lipid carrier undecaprenyl phosphate, yielding undecaprenyl-pyrophosphoryl-MurNAc-pentapeptide, known as lipid I. The chain is Phospho-N-acetylmuramoyl-pentapeptide-transferase from Syntrophotalea carbinolica (strain DSM 2380 / NBRC 103641 / GraBd1) (Pelobacter carbinolicus).